A 331-amino-acid chain; its full sequence is Glycerophosphodiester phosphodiesterase 1 (331 aa).

The Cytoplasmic segment spans residues 1 to 3; the sequence is MWL. The helical transmembrane segment at 4-24 threads the bilayer; the sequence is WEDQGGLLGPFSFLLLVLLLV. Over 25 to 247 the chain is Lumenal; that stretch reads TRSPVNACLL…KPRYDTFWKH (223 aa). In terms of domain architecture, GP-PDE spans 65–331; sequence ISAIAHRGGS…SMVEDCEPHF (267 aa). Positions 97 and 99 each coordinate Mg(2+). N168 carries N-linked (GlcNAc...) asparagine glycosylation. D174 contributes to the Mg(2+) binding site. A glycan (N-linked (GlcNAc...) asparagine) is linked at N198. Residues 248-268 traverse the membrane as a helical segment; it reads FIFVMMDILLDWSMHNILWYL. Residues 269–331 lie on the Cytoplasmic side of the membrane; the sequence is CGISAFLMQK…SMVEDCEPHF (63 aa).

This sequence belongs to the glycerophosphoryl diester phosphodiesterase family. As to quaternary structure, interacts with PRAF2. Interacts with RGS16. Requires Mg(2+) as cofactor. In terms of processing, N-glycosylated. Widely expressed.

It is found in the cell membrane. The protein resides in the cytoplasmic vesicle membrane. The enzyme catalyses sn-glycero-3-phospho-1D-myo-inositol + H2O = myo-inositol + sn-glycerol 3-phosphate + H(+). It catalyses the reaction 1-O-(1Z-octadecenyl)-sn-glycero-3-phospho-(N-5Z,8Z,11Z,14Z-eicosatetraenoyl)-ethanolamine + H2O = 1-O-(1Z-octadecenyl)-sn-glycero-3-phosphate + N-(5Z,8Z,11Z,14Z-eicosatetraenoyl)-ethanolamine + H(+). The catalysed reaction is 1-O-(1Z-octadecenyl)-sn-glycero-3-phospho-(N-9Z-octadecenoyl)-ethanolamine + H2O = 1-O-(1Z-octadecenyl)-sn-glycero-3-phosphate + N-(9Z-octadecenoyl) ethanolamine + H(+). It carries out the reaction 1-O-(1Z-octadecenyl)-sn-glycero-3-phospho-N-hexadecanoyl-ethanolamine + H2O = 1-O-(1Z-octadecenyl)-sn-glycero-3-phosphate + N-hexadecanoylethanolamine + H(+). The enzyme catalyses N-(4Z,7Z,10Z,13Z,16Z,19Z)-docosahexaenoyl-sn-glycero-3-phosphoethanolamine + H2O = N-(4Z,7Z,10Z,13Z,16Z,19Z)-docosahexaenoyl ethanolamine + sn-glycerol 3-phosphate + H(+). It catalyses the reaction N-eicosanoyl-sn-glycero-3-phosphoethanolamine + H2O = N-eicosanoyl ethanolamine + sn-glycerol 3-phosphate + H(+). The catalysed reaction is N-hexadecanoyl-sn-glycero-3-phosphoethanolamine + H2O = N-hexadecanoylethanolamine + sn-glycerol 3-phosphate + H(+). It carries out the reaction N-(9Z-octadecenoyl)-sn-glycero-3-phosphoethanolamine + H2O = N-(9Z-octadecenoyl) ethanolamine + sn-glycerol 3-phosphate + H(+). The enzyme catalyses N-(5Z,8Z,11Z,14Z-eicosatetraenoyl)-sn-glycero-3-phosphoethanolamine + H2O = N-(5Z,8Z,11Z,14Z-eicosatetraenoyl)-ethanolamine + sn-glycerol 3-phosphate + H(+). Inhibited by EDTA, calcium chloride, and zinc chloride. Enhanced by magnesium chloride. Glycerophosphodiester phosphodiesterase activity can be modulated by G-protein signaling pathways. Hydrolyzes the phosphodiester bond of glycerophosphodiesters such as glycerophosphoinositol (GroPIns) and glycerophosphoethanolamine (GroPEth), to yield a glycerol phosphate and an alcohol. Hydrolyzes glycerophospho-N-acylethanolamines to N-acylethanolamines in the brain and participates in bioactive N-acylethanolamine biosynthesis such as anandamide (an endocannabinoid), N-palmitoylethanolamine (an anti-inflammatory), and N-oleoylethanolamine (an anorexic). In addition, has a lysophospholipase D activity by hydrolyzing N-acyl-lysoplasmenylethanolamine (N-acyl-lysoPlsEt) to N-acylethanolamine. However lysophospholipase D activity is lower than glycerophosphodiester phosphodiesterase activity. Has little or no activity towards glycerophosphocholine. The protein is Glycerophosphodiester phosphodiesterase 1 of Homo sapiens (Human).